The sequence spans 1065 residues: MDQEIERVVQAIAIASEPSQSTLFQEALNYIQGIQENANETWRLALQIFVATNGDQGRKYPPQARFWALRVLEEFLENKFDPLDPETFQTLQQAMMSYIQSEYVQGPAEANAPFIRNKFSHTLTLLFLCTYIDQWPSFFTDLFSLIQPSSQSSSTGLNRHISLLFFHLVLEISGEVADQMIKTARTWSAVRHARDGRVRDAVRERDAARINEAVLTIVATNVERMNALKEGDGDSQELGNSIELVDWGIRTFGSYVGWIDINLTVTPTTVPLLFKLLADSSLPIRLATSVALLRIVAKGLKEPADKLQLFKVLSLGQVLDALESKTAKQQRERGDDVDEGEESYREALGKLLNVYGLELTKLVEDAPTDDIRSDASAALVDLQPVTLRFLADDYDDTASTVFPLLQAVLGSYKRSRKVSSGPIDDQKRSFLSALLQVILKKMKWDEEAEPDDVDDDDNGEFEKMRKELRTFMDAILTIDQDLVTDEVRKLALQTISAYQSGTSLKWNDAELGVYLVYIFGEINKSGGKGRAAFCQTPAVIDKDKRKVTDYSEFPLTSHGEMLLALVQSGIVSYPNRTVSLQFFETVTRYADFFKVRKECILPALEAMIDKRGLHNENQQFRIRLYYLFYKFIRESRHEIPSQIALTIINSLPDLLSINVQLSEPEDPESDPLTEAVKSPVFESQLYLFETIGILTSTLSKDTEEQGNLLLSIVKPFMEELLANLQLFRAGSQDLVPVVKVHHIIMALGNISKGFPDHPASTTSENYMAPSFKVFAEIAQAILVCLEAMNVIKPIRDATRFAFARILATAGPTVTGYIPPLMNHLLAHFEPSELVDFMNFISLLIHKLQKDMFEVLDKLIAPLHSHITAILSQAASGTDELRWQIETKKAYLNLLVVILNARLEGIFTSERNSASFEALLGSLLRIVEDVSDPPSQKLALTFFGRCVTVWGQPAGSPNPELGGNLPGFERFIYEQIVPTAFGVVALPSFNPKDGQALMVIHEVASLLQTVCKTRGSEAYDYFLSAFLPSKGWPAEMALDFTTKLRDLDSKNFRKYFTELIRASRSS.

The protein belongs to the exportin family.

The protein resides in the nucleus. It is found in the cytoplasm. Functionally, tRNA nucleus export receptor which facilitates tRNA translocation across the nuclear pore complex. Involved in pre-tRNA splicing, probably by affecting the interaction of pre-tRNA with splicing endonuclease. This Coprinopsis cinerea (strain Okayama-7 / 130 / ATCC MYA-4618 / FGSC 9003) (Inky cap fungus) protein is Exportin-T (LOS1).